Reading from the N-terminus, the 255-residue chain is 3-oxo-5-alpha-steroid 4-dehydrogenase 1 (255 aa).

Helical transmembrane passes span 6–26 (LCLL…AFVG), 82–102 (VLLA…PVLI), 107–127 (PTLL…GYLQ), 142–162 (VTHP…VINI), and 205–225 (FALA…LCAL).

This sequence belongs to the steroid 5-alpha reductase family.

It localises to the microsome membrane. The protein resides in the endoplasmic reticulum membrane. It carries out the reaction a 3-oxo-5alpha-steroid + NADP(+) = a 3-oxo-Delta(4)-steroid + NADPH + H(+). The enzyme catalyses 5alpha-pregnane-3,20-dione + NADP(+) = progesterone + NADPH + H(+). It catalyses the reaction 17beta-hydroxy-5alpha-androstan-3-one + NADP(+) = testosterone + NADPH + H(+). The catalysed reaction is androst-4-ene-3,17-dione + NADPH + H(+) = 5alpha-androstan-3,17-dione + NADP(+). Functionally, converts testosterone into 5-alpha-dihydrotestosterone and progesterone or corticosterone into their corresponding 5-alpha-3-oxosteroids. It plays a central role in sexual differentiation and androgen physiology. In Mus musculus (Mouse), this protein is 3-oxo-5-alpha-steroid 4-dehydrogenase 1.